Here is a 438-residue protein sequence, read N- to C-terminus: Minor capsid protein p49 (438 aa).

Residues Asn145–Thr167 are disordered.

Belongs to the asfivirus p49 structural protein family.

The protein localises to the virion. Together with the penton and the other minor capsid proteins (M1249L, p17), forms a complicated network immediately below the outer capsid shell, stabilizing the whole capsid. Plays an essential role in the formation of infectious virus particles. Especially required for the formation of the capsid vertices. During virion assembly, associates with the membrane and probably mediates the docking of the penton complex to the inner membrane, where it recruits the capsomers to form the penton core. The chain is Minor capsid protein p49 from Ornithodoros (relapsing fever ticks).